The primary structure comprises 896 residues: Bifunctional glutamine synthetase adenylyltransferase/adenylyl-removing enzyme (896 aa).

The adenylyl removase stretch occupies residues 1–411 (MSDNRLDTAR…LFNEILSEPE (411 aa)). The segment at 417-896 (NSEWQWAWQE…EVFGEEAATA (480 aa)) is adenylyl transferase.

The protein belongs to the GlnE family. It depends on Mg(2+) as a cofactor.

It carries out the reaction [glutamine synthetase]-O(4)-(5'-adenylyl)-L-tyrosine + phosphate = [glutamine synthetase]-L-tyrosine + ADP. The enzyme catalyses [glutamine synthetase]-L-tyrosine + ATP = [glutamine synthetase]-O(4)-(5'-adenylyl)-L-tyrosine + diphosphate. Functionally, involved in the regulation of glutamine synthetase GlnA, a key enzyme in the process to assimilate ammonia. When cellular nitrogen levels are high, the C-terminal adenylyl transferase (AT) inactivates GlnA by covalent transfer of an adenylyl group from ATP to specific tyrosine residue of GlnA, thus reducing its activity. Conversely, when nitrogen levels are low, the N-terminal adenylyl removase (AR) activates GlnA by removing the adenylyl group by phosphorolysis, increasing its activity. The regulatory region of GlnE binds the signal transduction protein PII (GlnB) which indicates the nitrogen status of the cell. In Neisseria meningitidis serogroup A / serotype 4A (strain DSM 15465 / Z2491), this protein is Bifunctional glutamine synthetase adenylyltransferase/adenylyl-removing enzyme.